A 1623-amino-acid polypeptide reads, in one-letter code: RING finger protein 17 (1623 aa).

The disordered stretch occupies residues 1–22 (MAAEASKTGPSRSSYQRMGRKS). The RING-type zinc finger occupies 32–75 (CTRCGRRVSRSSGHHCELQCGHAFCELCLLMTEECTTIICPDCE). N6-acetyllysine is present on lysine 234. Tudor domains lie at 726 to 784 (CPVQ…FLNA), 962 to 1021 (KWEN…LKTM), and 1228 to 1285 (FWKK…PDIP). Residues 1438–1462 (NQSNQHSDTDDSGVSGESESESLDE) form a disordered region. The region spanning 1479–1539 (DFRTEMPCLA…CQIPSHLMRY (61 aa)) is the Tudor 4 domain.

As to quaternary structure, interacts with MXD1, MXD3, MXD4, MXI1 and PIWIL1. Self-associates. As to expression, testis specific.

It is found in the cytoplasm. The protein resides in the nucleus. Seems to be involved in regulation of transcriptional activity of MYC. In vitro, inhibits DNA-binding activity of Mad-MAX heterodimers. Can recruit Mad transcriptional repressors (MXD1, MXD3, MXD4 and MXI1) to the cytoplasm. May be involved in spermiogenesis. This is RING finger protein 17 (RNF17) from Homo sapiens (Human).